The chain runs to 729 residues: Fatty acid oxidation complex subunit alpha (729 aa).

Residues 1 to 189 (MLYKGDTLYL…KIGLVDGVVK (189 aa)) are enoyl-CoA hydratase/isomerase. Asp-296 provides a ligand contact to substrate. The tract at residues 311–729 (ETPKQAAVLG…ARPVGDLKTA (419 aa)) is 3-hydroxyacyl-CoA dehydrogenase. Residues Met-324, Asp-343, 400–402 (VVE), Lys-407, and Ser-429 each bind NAD(+). His-450 serves as the catalytic For 3-hydroxyacyl-CoA dehydrogenase activity. Asn-453 is an NAD(+) binding site. Substrate-binding residues include Asn-500 and Tyr-660. The disordered stretch occupies residues 708 to 729 (RHNEPYYPPVEPARPVGDLKTA).

It in the N-terminal section; belongs to the enoyl-CoA hydratase/isomerase family. This sequence in the C-terminal section; belongs to the 3-hydroxyacyl-CoA dehydrogenase family. As to quaternary structure, heterotetramer of two alpha chains (FadB) and two beta chains (FadA).

The enzyme catalyses a (3S)-3-hydroxyacyl-CoA + NAD(+) = a 3-oxoacyl-CoA + NADH + H(+). The catalysed reaction is a (3S)-3-hydroxyacyl-CoA = a (2E)-enoyl-CoA + H2O. It carries out the reaction a 4-saturated-(3S)-3-hydroxyacyl-CoA = a (3E)-enoyl-CoA + H2O. It catalyses the reaction (3S)-3-hydroxybutanoyl-CoA = (3R)-3-hydroxybutanoyl-CoA. The enzyme catalyses a (3Z)-enoyl-CoA = a 4-saturated (2E)-enoyl-CoA. The catalysed reaction is a (3E)-enoyl-CoA = a 4-saturated (2E)-enoyl-CoA. Its pathway is lipid metabolism; fatty acid beta-oxidation. Its function is as follows. Involved in the aerobic and anaerobic degradation of long-chain fatty acids via beta-oxidation cycle. Catalyzes the formation of 3-oxoacyl-CoA from enoyl-CoA via L-3-hydroxyacyl-CoA. It can also use D-3-hydroxyacyl-CoA and cis-3-enoyl-CoA as substrate. The sequence is that of Fatty acid oxidation complex subunit alpha from Escherichia coli O17:K52:H18 (strain UMN026 / ExPEC).